The sequence spans 166 residues: Large ribosomal subunit protein uL10 (166 aa).

It belongs to the universal ribosomal protein uL10 family. As to quaternary structure, part of the ribosomal stalk of the 50S ribosomal subunit. The N-terminus interacts with L11 and the large rRNA to form the base of the stalk. The C-terminus forms an elongated spine to which L12 dimers bind in a sequential fashion forming a multimeric L10(L12)X complex.

Forms part of the ribosomal stalk, playing a central role in the interaction of the ribosome with GTP-bound translation factors. This Flavobacterium psychrophilum (strain ATCC 49511 / DSM 21280 / CIP 103535 / JIP02/86) protein is Large ribosomal subunit protein uL10.